The primary structure comprises 129 residues: uncharacterized protein (129 aa).

The next 3 membrane-spanning stretches (helical) occupy residues L22–F42, V55–F75, and L88–F108.

The protein resides in the membrane. This is an uncharacterized protein from Saccharomyces cerevisiae (strain ATCC 204508 / S288c) (Baker's yeast).